The chain runs to 79 residues: D-alanyl carrier protein (79 aa).

Positions 2-79 (AEFKEQVLDI…MVIKKLEEIR (78 aa)) constitute a Carrier domain. Ser37 carries the post-translational modification O-(pantetheine 4'-phosphoryl)serine.

Belongs to the DltC family. 4'-phosphopantetheine is transferred from CoA to a specific serine of apo-DCP.

It localises to the cytoplasm. Its pathway is cell wall biogenesis; lipoteichoic acid biosynthesis. Its function is as follows. Carrier protein involved in the D-alanylation of lipoteichoic acid (LTA). The loading of thioester-linked D-alanine onto DltC is catalyzed by D-alanine--D-alanyl carrier protein ligase DltA. The DltC-carried D-alanyl group is further transferred to cell membrane phosphatidylglycerol (PG) by forming an ester bond, probably catalyzed by DltD. D-alanylation of LTA plays an important role in modulating the properties of the cell wall in Gram-positive bacteria, influencing the net charge of the cell wall. The protein is D-alanyl carrier protein of Bacillus mycoides (strain KBAB4) (Bacillus weihenstephanensis).